Reading from the N-terminus, the 197-residue chain is Pre-mRNA-splicing factor SNT309 (197 aa).

In terms of assembly, associated with the spliceosome.

It is found in the nucleus. Involved in pre-mRNA splicing. The protein is Pre-mRNA-splicing factor SNT309 (SNT309) of Eremothecium gossypii (strain ATCC 10895 / CBS 109.51 / FGSC 9923 / NRRL Y-1056) (Yeast).